The primary structure comprises 67 residues: Cell division protein ZapB (67 aa).

Positions 3-59 form a coiled coil; the sequence is LELLSKLETKIQAALETIELLKMELEEEKQTSSSLSEQNQQLQQELTSWNEKVTGLV.

It belongs to the ZapB family. Homodimer. The ends of the coiled-coil dimer bind to each other, forming polymers. Interacts with FtsZ.

It localises to the cytoplasm. Its function is as follows. Non-essential, abundant cell division factor that is required for proper Z-ring formation. It is recruited early to the divisome by direct interaction with FtsZ, stimulating Z-ring assembly and thereby promoting cell division earlier in the cell cycle. Its recruitment to the Z-ring requires functional FtsA or ZipA. The sequence is that of Cell division protein ZapB from Shewanella halifaxensis (strain HAW-EB4).